Here is a 386-residue protein sequence, read N- to C-terminus: Acyl-[acyl-carrier-protein] dehydrogenase MbtN (386 aa).

It belongs to the acyl-CoA dehydrogenase family. FAD is required as a cofactor.

It functions in the pathway siderophore biosynthesis; mycobactin biosynthesis. Functionally, catalyzes the dehydrogenation at the alpha-beta position of ACP-bound acyl chains. This results in the introduction of a double bond in the lipidic chain, which is further transferred to the epsilon-amino group of lysine residue in the mycobactin core by MbtK. This is Acyl-[acyl-carrier-protein] dehydrogenase MbtN (mbtN) from Mycobacterium bovis (strain ATCC BAA-935 / AF2122/97).